The primary structure comprises 254 residues: Low affinity immunoglobulin gamma Fc region receptor III-A (254 aa).

Residues 1 to 16 (MWQLLLPTALLLLVSA) form the signal peptide. Over 17–208 (GMRAEDLPKA…ISSFFPPGYQ (192 aa)) the chain is Extracellular. 2 consecutive Ig-like C2-type domains span residues 24–105 (PKAV…LEVH) and 107–189 (GWLL…VNIT). Intrachain disulfides connect cysteine 47-cysteine 89 and cysteine 128-cysteine 172. N-linked (GlcNAc...) asparagine glycosylation is found at asparagine 56, asparagine 63, and asparagine 82. Asparagine 180 and asparagine 187 each carry an N-linked (GlcNAc...) asparagine glycan. Residues 209–229 (VSFCLVMVLLFAVDTGLYFSM) form a helical membrane-spanning segment. Residues 230-254 (KKSIPSSTRDWEDHKFKWSKDPQDK) lie on the Cytoplasmic side of the membrane.

In terms of assembly, forms a heterooligomeric complex with ITAM-containing signaling subunits, either a homodimer of CD247, a homodimer of FCER1G or a heterodimer of CD247 and FCER1G. Interacts (via transmembrane domain) with signaling subunits; this interaction is a prerequisite for receptor complex expression on the cell surface and intracellular signal transduction. Binds the Fc region of antigen-complexed IgG with a preference for IgG1 and IgG3 isotypes. Interacts with CD2; this interaction is involved in NK cell activation and cytotoxicity. Interacts with S100A4; this interaction inhibits PKC-dependent phosphorylation of FCGR3A. Post-translationally, glycosylated. Glycosylation plays an inhibitory role in the interaction with IgG1 and IgG2. Undergoes rapid ectodomain shedding upon NK cell stimulation. The soluble form is produced by a proteolytic cleavage mediated by ADAM17. Repeated stimulation causes receptor shedding, a mechanism that allows for increased NK cell motility and detachment from opsonized target cells while avoiding activation-induced NK cell apoptosis. Lymphocytes and monocytes.

The protein localises to the cell membrane. It localises to the secreted. Functionally, receptor for the invariable Fc fragment of immunoglobulin gamma (IgG). Optimally activated upon binding of clustered antigen-IgG complexes displayed on cell surfaces, triggers lysis of antibody-coated cells, a process known as antibody-dependent cellular cytotoxicity (ADCC). Does not bind free monomeric IgG, thus avoiding inappropriate effector cell activation in the absence of antigenic trigger. Mediates IgG effector functions on natural killer (NK) cells. Binds antigen-IgG complexes generated upon infection and triggers NK cell-dependent cytokine production and degranulation to limit viral load and propagation. Involved in the generation of memory-like adaptive NK cells capable to produce high amounts of IFNG and to efficiently eliminate virus-infected cells via ADCC. Regulates NK cell survival and proliferation, in particular by preventing NK cell progenitor apoptosis. Fc-binding subunit that associates with CD247 and/or FCER1G adapters to form functional signaling complexes. Following the engagement of antigen-IgG complexes, triggers phosphorylation of immunoreceptor tyrosine-based activation motif (ITAM)-containing adapters with subsequent activation of phosphatidylinositol 3-kinase signaling and sustained elevation of intracellular calcium that ultimately drive NK cell activation. The ITAM-dependent signaling coupled to receptor phosphorylation by PKC mediates robust intracellular calcium flux that leads to production of pro-inflammatory cytokines, whereas in the absence of receptor phosphorylation it mainly activates phosphatidylinositol 3-kinase signaling leading to cell degranulation. Costimulates NK cells and trigger lysis of target cells independently of IgG binding. Mediates the antitumor activities of therapeutic antibodies. Upon ligation on monocytes triggers TNFA-dependent ADCC of IgG-coated tumor cells. Mediates enhanced ADCC in response to afucosylated IgGs. The protein is Low affinity immunoglobulin gamma Fc region receptor III-A (FCGR3A) of Macaca fascicularis (Crab-eating macaque).